The chain runs to 209 residues: MGNVFVFDHPLIQHKLTYIRDKNTGTKEFRELVDEVAMLMAFEITRDLPVKEVNVDTPVTTAPSKVLAGKKLGLVPILRAGLGMVDGVRKLIPAAKVGHVGLYRDPETFKPVEYYVKLPNDIEEREIIVIDPMLATGGSANDAIAAIKKRGAKNIRLMCLIAAPEGVEVVKEAHPDVDIYLAAMDERLDDHGYIIPGLGDAGDRLFGTK.

Residues R79, R104, and 131 to 139 (DPMLATGGS) each bind 5-phospho-alpha-D-ribose 1-diphosphate. Uracil contacts are provided by residues I194 and 199–201 (GDA). 5-phospho-alpha-D-ribose 1-diphosphate is bound at residue D200.

This sequence belongs to the UPRTase family. Mg(2+) serves as cofactor.

The catalysed reaction is UMP + diphosphate = 5-phospho-alpha-D-ribose 1-diphosphate + uracil. It participates in pyrimidine metabolism; UMP biosynthesis via salvage pathway; UMP from uracil: step 1/1. With respect to regulation, allosterically activated by GTP. Its function is as follows. Catalyzes the conversion of uracil and 5-phospho-alpha-D-ribose 1-diphosphate (PRPP) to UMP and diphosphate. The polypeptide is Uracil phosphoribosyltransferase (Oceanobacillus iheyensis (strain DSM 14371 / CIP 107618 / JCM 11309 / KCTC 3954 / HTE831)).